An 81-amino-acid polypeptide reads, in one-letter code: Putative defensin-like protein 102 (81 aa).

Residues 1-24 (MTTTMKTFVAFVLTVFFIMSSAHC) form the signal peptide. Cystine bridges form between Cys43–Cys78, Cys49–Cys71, Cys57–Cys76, and Cys61–Cys77.

It belongs to the DEFL family.

It is found in the secreted. The chain is Putative defensin-like protein 102 from Arabidopsis thaliana (Mouse-ear cress).